The following is a 642-amino-acid chain: Serine/threonine-protein kinase pakA (642 aa).

Composition is skewed to polar residues over residues 1–12 (MSLKKQQQQSDF) and 38–48 (LRQSASFTALN). The interval 1–82 (MSLKKQQQQS…GFGTKPRRKN (82 aa)) is disordered. Residues 100 to 113 (ISAPENPVHVTHVG) form the CRIB domain. Disordered regions lie at residues 180–276 (GEYP…PIPE) and 317–338 (QLDR…RTRQ). Composition is skewed to low complexity over residues 217 to 227 (SQSSPVPVLSS) and 254 to 266 (VVSN…RPAN). The Protein kinase domain maps to 361–612 (YYNLNKIGQG…AHDLLKHPFM (252 aa)). Residues 367-375 (IGQGASGGV) and Lys390 contribute to the ATP site. Asp480 functions as the Proton acceptor in the catalytic mechanism.

Belongs to the protein kinase superfamily. STE Ser/Thr protein kinase family. STE20 subfamily.

Its subcellular location is the cytoplasm. The protein localises to the nucleus. The enzyme catalyses L-seryl-[protein] + ATP = O-phospho-L-seryl-[protein] + ADP + H(+). The catalysed reaction is L-threonyl-[protein] + ATP = O-phospho-L-threonyl-[protein] + ADP + H(+). MAP4K component of the MAPK pathway required for the mating pheromone response and the regulation of cell polarity and cell cycle. The polypeptide is Serine/threonine-protein kinase pakA (pakA) (Talaromyces marneffei (Penicillium marneffei)).